Here is a 72-residue protein sequence, read N- to C-terminus: Sperm protein associated with the nucleus on the X chromosome N1 (72 aa).

The interval 1 to 44 (MEQPTSSINGEKRKSPCESNNENDEMQETPNRDLAPEPSLKKMK) is disordered.

The protein belongs to the SPAN-X family.

The chain is Sperm protein associated with the nucleus on the X chromosome N1 (SPANXN1) from Homo sapiens (Human).